A 471-amino-acid polypeptide reads, in one-letter code: Secretogranin-3 (471 aa).

Residues 1 to 22 form the signal peptide; the sequence is MGFLWTGSWILVLVLNSGPIQA. Disordered regions lie at residues 24 to 45, 89 to 108, and 345 to 404; these read PKPE…ERPL, TVEK…QLNV, and KLEK…TDEA. The span at 28–45 shows a compositional bias: basic and acidic residues; the sequence is GSQDKSLHNRELSAERPL. Residue Ser-40 is modified to Phosphoserine. Residue Ser-40 is glycosylated (O-linked (Xyl...) (chondroitin sulfate) serine). Composition is skewed to basic and acidic residues over residues 345-355 and 364-404; these read KLEKNTTDSKS and KSQE…TDEA. Ser-365 carries the post-translational modification Phosphoserine.

In terms of assembly, interacts with CHGA. Interacts with secretogranin II/SCG2. Interacts (via C-terminus) with CPE. As to expression, expressed in various brain areas, with highest levels in the arcuate nucleus and the lateral hypothalamic area, as well as the paraventricular nucleus and the ventromedial hypothalamus (at protein level).

It localises to the cytoplasmic vesicle. The protein resides in the secretory vesicle. Its subcellular location is the secretory vesicle membrane. The protein localises to the secreted. Member of the granin protein family that regulates the biogenesis of secretory granules. Acts as a sorting receptor for intragranular proteins including chromogranin A/CHGA. May also play a role in angiogenesis. Promotes endothelial proliferation, migration and tube formation through MEK/ERK signaling pathway. In Mus musculus (Mouse), this protein is Secretogranin-3 (Scg3).